Consider the following 172-residue polypeptide: MEKIVLLGYMGCGKSTIAQNLSKITQIPFLDLDICIEKRANLSIKEIFEQHGEIYFRKLEHEMFLELLQSSENAIIGLGGGTPCYANNHLLLQRDDIVSVYLKASIDTLYNRLVHNKSKRPLIANMDEEEMKEFIAKHLFDRSFYYNHAQHKVAVDNRTIDETVQDILDILA.

11–16 (GCGKST) contributes to the ATP binding site. Ser-15 is a binding site for Mg(2+). The substrate site is built by Asp-33, Arg-57, and Gly-80. Residue Arg-120 coordinates ATP. Arg-142 is a substrate binding site. Arg-158 contacts ATP.

This sequence belongs to the shikimate kinase family. As to quaternary structure, monomer. Mg(2+) is required as a cofactor.

The protein resides in the cytoplasm. It catalyses the reaction shikimate + ATP = 3-phosphoshikimate + ADP + H(+). Its pathway is metabolic intermediate biosynthesis; chorismate biosynthesis; chorismate from D-erythrose 4-phosphate and phosphoenolpyruvate: step 5/7. In terms of biological role, catalyzes the specific phosphorylation of the 3-hydroxyl group of shikimic acid using ATP as a cosubstrate. This chain is Shikimate kinase, found in Flavobacterium johnsoniae (strain ATCC 17061 / DSM 2064 / JCM 8514 / BCRC 14874 / CCUG 350202 / NBRC 14942 / NCIMB 11054 / UW101) (Cytophaga johnsonae).